Here is a 396-residue protein sequence, read N- to C-terminus: Major outer membrane porin, serovar A (396 aa).

Residues 1–22 (MKKLLKSVLVFAALSSASSLQA) form the signal peptide.

It belongs to the chlamydial porin (CP) (TC 1.B.2) family. As to quaternary structure, part of a disulfide cross-linked outer membrane complex (COMC) composed of the major outer membrane porin (MOMP), the small cysteine-rich protein (OmcA) and the large cysteine-rich periplasmic protein (OmcB).

The protein localises to the cell outer membrane. In terms of biological role, in elementary bodies (EBs, the infectious stage, which is able to survive outside the host cell) provides the structural integrity of the outer envelope through disulfide cross-links with the small cysteine-rich protein and the large cysteine-rich periplasmic protein. It has been described in publications as the Sarkosyl-insoluble COMC (Chlamydia outer membrane complex), and serves as the functional equivalent of peptidoglycan. Permits diffusion of specific solutes through the outer membrane. The polypeptide is Major outer membrane porin, serovar A (ompA) (Chlamydia trachomatis).